The chain runs to 238 residues: Lipid transferase CIDEC (238 aa).

Residues 1-35 (MDYAMKSLSLLYPRSLSRHVAVSTAVVTQQLVSEP) are required for liquid-liquid phase separation (LLPS). In terms of domain architecture, CIDE-N spans 41–118 (RARPCRVSTA…VLQKGQKWKS (78 aa)).

The protein belongs to the CIDE family. In terms of assembly, homodimer. Interacts with CIDEA. Homooligomer; undergoes liquid-liquid phase separation (LLPS) via its N-terminus, facilitating lipid droplet fusion, occurs at the lipid droplet contact sites. Interacts with PLIN1. Interacts with NFAT5; this interaction is direct and retains NFAT5 in the cytoplasm. Interacts with CEBPB. Interacts with isoform CLSTN3beta of CLSTN3; inhibiting the lipid transferase activity of CIDEC. Ubiquitinated and targeted to proteasomal degradation, resulting in a short half-life (about 15 minutes in 3T3-L1 cells). Protein stability depends on triaclyglycerol synthesis, fatty acid availability and lipid droplet formation.

It localises to the lipid droplet. The protein resides in the endoplasmic reticulum. It is found in the nucleus. The enzyme catalyses a triacyl-sn-glycerol(in) = a triacyl-sn-glycerol(out). In terms of biological role, lipid transferase specifically expressed in white adipose tissue, which promotes unilocular lipid droplet formation by mediating lipid droplet fusion. Lipid droplet fusion promotes their enlargement, restricting lipolysis and favoring lipid storage. Localizes on the lipid droplet surface, at focal contact sites between lipid droplets, and mediates atypical lipid droplet fusion by undergoing liquid-liquid phase separation (LLPS) and promoting directional net neutral lipid transfer from the smaller to larger lipid droplets. The transfer direction may be driven by the internal pressure difference between the contacting lipid droplet pair. Its role in neutral lipid transfer and lipid droplet enlargement is activated by the interaction with PLIN1. May also act as a CEBPB coactivator in the white adipose tissue to control the expression of a subset of CEBPB downstream target genes, including SOCS1, SOCS3, TGFB1, TGFBR1, ID2 and XDH. When overexpressed in preadipocytes, induces apoptosis or increases cell susceptibility to apoptosis induced by serum deprivation or TGFB treatment. The sequence is that of Lipid transferase CIDEC from Rattus norvegicus (Rat).